The primary structure comprises 574 residues: MYND-type zinc finger protein C31F10.10c (574 aa).

2 disordered regions span residues 207–253 (DSGD…QDPR) and 283–307 (MTTP…DEID). Composition is skewed to polar residues over residues 243 to 253 (IYSNDSFQDPR) and 283 to 301 (MTTP…ASET). The MYND-type; degenerate zinc finger occupies 482–523 (NLLCNKWEEHSRQFAKCRRCRRTKYCSKECQHQAWPGHSRWC). Positions 498, 501, 519, and 523 each coordinate Zn(2+). Residues 534-574 (KRESSKINSVTESESTASPAASVIPVGTESVTSSTQSDSRL) form a disordered region. The span at 542–556 (SVTESESTASPAASV) shows a compositional bias: low complexity. Polar residues predominate over residues 562–574 (ESVTSSTQSDSRL).

The protein belongs to the MUB1/samB family.

Its subcellular location is the nucleus. The protein resides in the cytoplasm. It localises to the cytoskeleton. It is found in the microtubule organizing center. The protein localises to the spindle pole body. In Schizosaccharomyces pombe (strain 972 / ATCC 24843) (Fission yeast), this protein is MYND-type zinc finger protein C31F10.10c.